A 491-amino-acid chain; its full sequence is Ketol-acid reductoisomerase (NADP(+)) (491 aa).

Residues 15 to 208 enclose the KARI N-terminal Rossmann domain; it reads AQLGKCRFMG…GGHRAGVLES (194 aa). NADP(+) contacts are provided by residues 45–48, R68, R76, S78, and 108–110; these read CGAQ and DKQ. H132 is a catalytic residue. An NADP(+)-binding site is contributed by G158. KARI C-terminal knotted domains follow at residues 209–344 and 345–484; these read SFVA…TAPQ and YEGK…MTDM. D217, E221, E389, and E393 together coordinate Mg(2+). A substrate-binding site is contributed by S414.

This sequence belongs to the ketol-acid reductoisomerase family. It depends on Mg(2+) as a cofactor.

The catalysed reaction is (2R)-2,3-dihydroxy-3-methylbutanoate + NADP(+) = (2S)-2-acetolactate + NADPH + H(+). It catalyses the reaction (2R,3R)-2,3-dihydroxy-3-methylpentanoate + NADP(+) = (S)-2-ethyl-2-hydroxy-3-oxobutanoate + NADPH + H(+). Its pathway is amino-acid biosynthesis; L-isoleucine biosynthesis; L-isoleucine from 2-oxobutanoate: step 2/4. The protein operates within amino-acid biosynthesis; L-valine biosynthesis; L-valine from pyruvate: step 2/4. Functionally, involved in the biosynthesis of branched-chain amino acids (BCAA). Catalyzes an alkyl-migration followed by a ketol-acid reduction of (S)-2-acetolactate (S2AL) to yield (R)-2,3-dihydroxy-isovalerate. In the isomerase reaction, S2AL is rearranged via a Mg-dependent methyl migration to produce 3-hydroxy-3-methyl-2-ketobutyrate (HMKB). In the reductase reaction, this 2-ketoacid undergoes a metal-dependent reduction by NADPH to yield (R)-2,3-dihydroxy-isovalerate. The chain is Ketol-acid reductoisomerase (NADP(+)) from Salmonella arizonae (strain ATCC BAA-731 / CDC346-86 / RSK2980).